Consider the following 103-residue polypeptide: Cyclotide vibi-K (103 aa).

Positions Ala1–Ala9 are cleaved as a signal peptide. The propeptide occupies Ser10–Asn69. The cyclopeptide (Gly-Asn) cross-link spans Gly70–Asn99. 3 disulfides stabilise this stretch: Cys73/Cys89, Cys77/Cys91, and Cys82/Cys96. A propeptide spanning residues Ser100–Asn103 is cleaved from the precursor.

In terms of processing, this is a cyclic peptide.

Its function is as follows. Probably participates in a plant defense mechanism. The protein is Cyclotide vibi-K of Viola biflora (Yellow wood violet).